A 90-amino-acid polypeptide reads, in one-letter code: MSRTIFCTFLQRDAEGQDFQLYPGEVGKRIYNEISKEAWAEWMKKQTMLINEKKLNMMNVDDRKLLEGEMIKFLFEGHDVHIEGYTPPSE.

This sequence belongs to the Fe(2+)-trafficking protein family. In terms of assembly, monomer.

Functionally, could be a mediator in iron transactions between iron acquisition and iron-requiring processes, such as synthesis and/or repair of Fe-S clusters in biosynthetic enzymes. The polypeptide is Probable Fe(2+)-trafficking protein (Serratia proteamaculans (strain 568)).